Here is a 188-residue protein sequence, read N- to C-terminus: MAASMFAGAVRAASGILRPLNILASSAYRNCTKNACLNSILSSRHFSHIQTPVVSSAPRLITSVRNLTCGQTATVLNRMALLLPNVLKPPVRTVTYCSSRKGKRKTVKAVIYRFLRLHSGLWLRRKAGYKKKLWKKTVARKRRLREFVFCNKTQSKLLDKMTTSFWKRRNWYADDPYQMYHDRTNLKV.

This sequence belongs to the bacterial ribosomal protein bL35 family.

The protein localises to the mitochondrion. This is Large ribosomal subunit protein bL35m (MRPL35) from Bos taurus (Bovine).